The sequence spans 515 residues: Cytochrome P450 1A2 (515 aa).

Residue Ser69 is glycosylated (O-linked (GlcNAc) serine). Position 226 (Phe226) interacts with substrate. Cys458 contacts heme.

Belongs to the cytochrome P450 family. Interacts with PGRMC1; the interaction requires PGRMC1 homodimerization. It depends on heme as a cofactor.

It is found in the endoplasmic reticulum membrane. Its subcellular location is the microsome membrane. It carries out the reaction an organic molecule + reduced [NADPH--hemoprotein reductase] + O2 = an alcohol + oxidized [NADPH--hemoprotein reductase] + H2O + H(+). The enzyme catalyses 17beta-estradiol + reduced [NADPH--hemoprotein reductase] + O2 = 2-hydroxy-17beta-estradiol + oxidized [NADPH--hemoprotein reductase] + H2O + H(+). The catalysed reaction is 17beta-estradiol + reduced [NADPH--hemoprotein reductase] + O2 = 4-hydroxy-17beta-estradiol + oxidized [NADPH--hemoprotein reductase] + H2O + H(+). It catalyses the reaction estrone + reduced [NADPH--hemoprotein reductase] + O2 = 2-hydroxyestrone + oxidized [NADPH--hemoprotein reductase] + H2O + H(+). It carries out the reaction estrone + reduced [NADPH--hemoprotein reductase] + O2 = 4-hydroxyestrone + oxidized [NADPH--hemoprotein reductase] + H2O + H(+). The enzyme catalyses cholesterol + reduced [NADPH--hemoprotein reductase] + O2 = 25-hydroxycholesterol + oxidized [NADPH--hemoprotein reductase] + H2O + H(+). The catalysed reaction is all-trans-retinol + reduced [NADPH--hemoprotein reductase] + O2 = all-trans-retinal + oxidized [NADPH--hemoprotein reductase] + 2 H2O + H(+). It catalyses the reaction all-trans-retinal + reduced [NADPH--hemoprotein reductase] + O2 = all-trans-retinoate + oxidized [NADPH--hemoprotein reductase] + H2O + 2 H(+). It carries out the reaction (5Z,8Z,11Z,14Z)-eicosatetraenoate + reduced [NADPH--hemoprotein reductase] + O2 = (14R,15S)-epoxy-(5Z,8Z,11Z)-eicosatrienoate + oxidized [NADPH--hemoprotein reductase] + H2O + H(+). The enzyme catalyses (5Z,8Z,11Z,14Z)-eicosatetraenoate + reduced [NADPH--hemoprotein reductase] + O2 = (14S,15R)-epoxy-(5Z,8Z,11Z)-eicosatrienoate + oxidized [NADPH--hemoprotein reductase] + H2O + H(+). The catalysed reaction is (5Z,8Z,11Z,14Z,17Z)-eicosapentaenoate + reduced [NADPH--hemoprotein reductase] + O2 = (17R,18S)-epoxy-(5Z,8Z,11Z,14Z)-eicosatetraenoate + oxidized [NADPH--hemoprotein reductase] + H2O + H(+). It catalyses the reaction (4Z,7Z,10Z,13Z,16Z,19Z)-docosahexaenoate + reduced [NADPH--hemoprotein reductase] + O2 = (19R,20S)-epoxy-(4Z,7Z,10Z,13Z,16Z)-docosapentaenoate + oxidized [NADPH--hemoprotein reductase] + H2O + H(+). It carries out the reaction (5S)-hydroperoxy-(6E,8Z,11Z,14Z)-eicosatetraenoate = 5-oxo-(6E,8Z,11Z,14Z)-eicosatetraenoate + H2O. The enzyme catalyses (12S)-hydroperoxy-(5Z,8Z,10E,14Z)-eicosatetraenoate = 12-oxo-(5Z,8Z,10E,14Z)-eicosatetraenoate + H2O. The catalysed reaction is (15S)-hydroperoxy-(5Z,8Z,11Z,13E)-eicosatetraenoate = 15-oxo-(5Z,8Z,11Z,13E)-eicosatetraenoate + H2O. It catalyses the reaction (13S)-hydroperoxy-(9Z,11E)-octadecadienoate = 13-oxo-(9Z,11E)-octadecadienoate + H2O. It carries out the reaction (5Z,8Z,11Z,14Z)-eicosatetraenoate + reduced [NADPH--hemoprotein reductase] + O2 = 13-hydroxy-(5Z,8Z,11Z,14Z)-eicosatetraenoate + oxidized [NADPH--hemoprotein reductase] + H2O + H(+). The enzyme catalyses (5Z,8Z,11Z,14Z)-eicosatetraenoate + reduced [NADPH--hemoprotein reductase] + O2 = 19-hydroxy-(5Z,8Z,11Z,14Z)-eicosatetraenoate + oxidized [NADPH--hemoprotein reductase] + H2O + H(+). The catalysed reaction is (9Z,12Z)-octadecadienoate + reduced [NADPH--hemoprotein reductase] + O2 = 11-hydroxy-(9Z,12Z)-octadecadienoate + oxidized [NADPH--hemoprotein reductase] + H2O + H(+). The protein operates within cofactor metabolism; retinol metabolism. It functions in the pathway steroid metabolism; cholesterol metabolism. Its pathway is lipid metabolism; arachidonate metabolism. In terms of biological role, a cytochrome P450 monooxygenase involved in the metabolism of various endogenous substrates, including fatty acids, steroid hormones and vitamins. Mechanistically, uses molecular oxygen inserting one oxygen atom into a substrate, and reducing the second into a water molecule, with two electrons provided by NADPH via cytochrome P450 reductase (NADPH--hemoprotein reductase). Catalyzes the hydroxylation of carbon-hydrogen bonds. Exhibits high catalytic activity for the formation of hydroxyestrogens from estrone (E1) and 17beta-estradiol (E2), namely 2-hydroxy E1 and E2. Metabolizes cholesterol toward 25-hydroxycholesterol, a physiological regulator of cellular cholesterol homeostasis. May act as a major enzyme for all-trans retinoic acid biosynthesis in the liver. Catalyzes two successive oxidative transformation of all-trans retinol to all-trans retinal and then to the active form all-trans retinoic acid. Primarily catalyzes stereoselective epoxidation of the last double bond of polyunsaturated fatty acids (PUFA), displaying a strong preference for the (R,S) stereoisomer. Catalyzes bisallylic hydroxylation and omega-1 hydroxylation of PUFA. May also participate in eicosanoids metabolism by converting hydroperoxide species into oxo metabolites (lipoxygenase-like reaction, NADPH-independent). Plays a role in the oxidative metabolism of xenobiotics. Catalyzes the N-hydroxylation of heterocyclic amines and the O-deethylation of phenacetin. Metabolizes caffeine via N3-demethylation. In Cavia porcellus (Guinea pig), this protein is Cytochrome P450 1A2 (CYP1A2).